We begin with the raw amino-acid sequence, 368 residues long: 4-hydroxy-3-methylbut-2-en-1-yl diphosphate synthase (flavodoxin) (368 aa).

[4Fe-4S] cluster is bound by residues Cys-271, Cys-274, Cys-306, and Glu-313.

This sequence belongs to the IspG family. [4Fe-4S] cluster serves as cofactor.

The enzyme catalyses (2E)-4-hydroxy-3-methylbut-2-enyl diphosphate + oxidized [flavodoxin] + H2O + 2 H(+) = 2-C-methyl-D-erythritol 2,4-cyclic diphosphate + reduced [flavodoxin]. It functions in the pathway isoprenoid biosynthesis; isopentenyl diphosphate biosynthesis via DXP pathway; isopentenyl diphosphate from 1-deoxy-D-xylulose 5-phosphate: step 5/6. Its function is as follows. Converts 2C-methyl-D-erythritol 2,4-cyclodiphosphate (ME-2,4cPP) into 1-hydroxy-2-methyl-2-(E)-butenyl 4-diphosphate. This chain is 4-hydroxy-3-methylbut-2-en-1-yl diphosphate synthase (flavodoxin), found in Buchnera aphidicola subsp. Acyrthosiphon pisum (strain APS) (Acyrthosiphon pisum symbiotic bacterium).